Consider the following 48-residue polypeptide: uncharacterized protein (48 aa).

A signal peptide spans M1 to A21.

This is an uncharacterized protein from Bacillus anthracis.